The sequence spans 428 residues: ATP-dependent RNA helicase RhlB (428 aa).

Positions Gln9–Ala37 match the Q motif motif. Residues Leu40 to Val219 form the Helicase ATP-binding domain. Ala53–Thr60 lines the ATP pocket. The DEAD box motif lies at Asp165–Asp168. In terms of domain architecture, Helicase C-terminal spans Arg245–Leu390. The interval Pro394 to Gly428 is disordered.

This sequence belongs to the DEAD box helicase family. RhlB subfamily. In terms of assembly, component of the RNA degradosome, which is a multiprotein complex involved in RNA processing and mRNA degradation.

Its subcellular location is the cytoplasm. The catalysed reaction is ATP + H2O = ADP + phosphate + H(+). DEAD-box RNA helicase involved in RNA degradation. Has RNA-dependent ATPase activity and unwinds double-stranded RNA. The protein is ATP-dependent RNA helicase RhlB of Yersinia pseudotuberculosis serotype O:1b (strain IP 31758).